The following is a 270-amino-acid chain: Putative phosphoenolpyruvate synthase regulatory protein (270 aa).

ADP is bound at residue 150–157 (GVSRCGKT).

Belongs to the pyruvate, phosphate/water dikinase regulatory protein family. PSRP subfamily.

The catalysed reaction is [pyruvate, water dikinase] + ADP = [pyruvate, water dikinase]-phosphate + AMP + H(+). It catalyses the reaction [pyruvate, water dikinase]-phosphate + phosphate + H(+) = [pyruvate, water dikinase] + diphosphate. Its function is as follows. Bifunctional serine/threonine kinase and phosphorylase involved in the regulation of the phosphoenolpyruvate synthase (PEPS) by catalyzing its phosphorylation/dephosphorylation. This Shewanella woodyi (strain ATCC 51908 / MS32) protein is Putative phosphoenolpyruvate synthase regulatory protein.